A 515-amino-acid chain; its full sequence is GMP synthase [glutamine-hydrolyzing] (515 aa).

Residues 10-200 (TIIVLDFGSQ…VFGVCGCSEG (191 aa)) form the Glutamine amidotransferase type-1 domain. The active-site Nucleophile is cysteine 87. Active-site residues include histidine 174 and glutamate 176. In terms of domain architecture, GMPS ATP-PPase spans 201 to 390 (WNMENFIEVE…LGIPDEIVWR (190 aa)). 228-234 (SGGVDSS) contributes to the ATP binding site.

In terms of assembly, homodimer.

The catalysed reaction is XMP + L-glutamine + ATP + H2O = GMP + L-glutamate + AMP + diphosphate + 2 H(+). It participates in purine metabolism; GMP biosynthesis; GMP from XMP (L-Gln route): step 1/1. In terms of biological role, catalyzes the synthesis of GMP from XMP. The chain is GMP synthase [glutamine-hydrolyzing] from Bacillus cereus (strain ATCC 14579 / DSM 31 / CCUG 7414 / JCM 2152 / NBRC 15305 / NCIMB 9373 / NCTC 2599 / NRRL B-3711).